We begin with the raw amino-acid sequence, 128 residues long: MDMFSAPDRIPEQIRIFFKTMKQVVPAKAVCGSTVLDVAHKNGVDLEGACEGNLACSTCHVILEEPLYRKLGEPSDKEYDLIDQAFGATGTSRLGCQLRVDKSFENAVFTVPRATKNMAVDGFKPKPH.

Residues 12–115 form the 2Fe-2S ferredoxin-type domain; the sequence is EQIRIFFKTM…NAVFTVPRAT (104 aa). Positions 50, 56, 59, and 96 each coordinate [2Fe-2S] cluster.

It belongs to the adrenodoxin/putidaredoxin family. [2Fe-2S] cluster serves as cofactor.

The protein resides in the mitosome. Its function is as follows. Ferredoxins are iron-sulfur proteins that transfer electrons in a wide variety of metabolic reactions. In Encephalitozoon cuniculi (strain GB-M1) (Microsporidian parasite), this protein is Adrenodoxin homolog.